We begin with the raw amino-acid sequence, 897 residues long: Isoleucine--tRNA ligase (897 aa).

The 'HIGH' region motif lies at 59–69 (PYANGDIHVGH). E552 is a binding site for L-isoleucyl-5'-AMP. Residues 593–597 (KMSKS) carry the 'KMSKS' region motif. K596 contacts ATP. Positions 872, 875, 890, and 893 each coordinate Zn(2+).

Belongs to the class-I aminoacyl-tRNA synthetase family. IleS type 1 subfamily. As to quaternary structure, monomer. It depends on Zn(2+) as a cofactor.

It localises to the cytoplasm. It carries out the reaction tRNA(Ile) + L-isoleucine + ATP = L-isoleucyl-tRNA(Ile) + AMP + diphosphate. Catalyzes the attachment of isoleucine to tRNA(Ile). As IleRS can inadvertently accommodate and process structurally similar amino acids such as valine, to avoid such errors it has two additional distinct tRNA(Ile)-dependent editing activities. One activity is designated as 'pretransfer' editing and involves the hydrolysis of activated Val-AMP. The other activity is designated 'posttransfer' editing and involves deacylation of mischarged Val-tRNA(Ile). This chain is Isoleucine--tRNA ligase, found in Mycoplasmoides gallisepticum (strain R(low / passage 15 / clone 2)) (Mycoplasma gallisepticum).